Reading from the N-terminus, the 878-residue chain is Alanine--tRNA ligase (878 aa).

4 residues coordinate Zn(2+): His568, His572, Cys670, and His674.

It belongs to the class-II aminoacyl-tRNA synthetase family. The cofactor is Zn(2+).

The protein resides in the cytoplasm. The catalysed reaction is tRNA(Ala) + L-alanine + ATP = L-alanyl-tRNA(Ala) + AMP + diphosphate. In terms of biological role, catalyzes the attachment of alanine to tRNA(Ala) in a two-step reaction: alanine is first activated by ATP to form Ala-AMP and then transferred to the acceptor end of tRNA(Ala). Also edits incorrectly charged Ser-tRNA(Ala) and Gly-tRNA(Ala) via its editing domain. The protein is Alanine--tRNA ligase of Latilactobacillus sakei subsp. sakei (strain 23K) (Lactobacillus sakei subsp. sakei).